A 485-amino-acid polypeptide reads, in one-letter code: Ulvan lyase (485 aa).

The signal sequence occupies residues 1 to 33 (MIRNDTMLKGQFVLKKTQIALSAALMGSVLLTG). Residue C34 is the site of N-palmitoyl cysteine attachment. C34 is lipidated: S-diacylglycerol cysteine. Residues N64 and N126 each coordinate substrate. Residues 108 to 128 (FKAGTSELGRRDGGKKFDNHG) form a disordered region. The segment covering 115–128 (LGRRDGGKKFDNHG) has biased composition (basic and acidic residues). Catalysis depends on H127, which acts as the Proton donor. K129 and H147 together coordinate substrate. The active-site Proton acceptor is the Y192. 3 residues coordinate substrate: R208, H212, and Y250. Zn(2+) is bound at residue H212. 3 residues coordinate Zn(2+): H268, C270, and H282. H282 is a substrate binding site.

The protein belongs to the polysaccharide lyase 25 family.

The protein localises to the cell membrane. Ulvan lyase involved in ulvan degradation. Ulvan is the main polysaccharide component of the Ulvales (green seaweed) cell wall. It is composed of disaccharide building blocks comprising 3-sulfated rhamnose (Rha3S) linked to D-glucuronic acid (GlcA), L-iduronic acid (IduA), or D-xylose (Xyl). Ulvan lyase catalyzes the endolytic cleavage of the glycosidic bond between Rha3S and the uronic acids GlcA or IduA, producing oligosaccharides that have unsaturated 4-deoxy-L-threo-hex-4-enopyranosiduronic acid (deltaUA) at the non-reducing end. This results eventually in the degradation of the ulvan polysaccharide into deltaUA-Rha3S disaccharides and deltaUA-Rha3S-Xyl-Rha3S tetrasaccharides. This Alteromonas sp. (strain LOR) protein is Ulvan lyase.